A 484-amino-acid chain; its full sequence is Calcium-dependent protein kinase 26 (484 aa).

Residues 24–282 (YSLGHKLGQG…AHQVLRHPWI (259 aa)) form the Protein kinase domain. Residues 30-38 (LGQGQFGTT) and K53 each bind ATP. Catalysis depends on D148, which acts as the Proton acceptor. S188 carries the post-translational modification Phosphoserine. Residues 288 to 318 (APDRALDPAVLSRLKQFSAMNKLKQMALRVI) are autoinhibitory domain. EF-hand domains are found at residues 325–360 (EEIA…YGST), 361–396 (LKDT…LNKL), 397–432 (EREE…QGMS), and 436–466 (LEDV…GIVG). Residues D338, D340, S342, E349, D374, D376, S378, T380, E385, D410, D412, S414, Y416, E421, D444, D446, D448, R450, and E455 each contribute to the Ca(2+) site.

Belongs to the protein kinase superfamily. Ser/Thr protein kinase family. CDPK subfamily.

It carries out the reaction L-seryl-[protein] + ATP = O-phospho-L-seryl-[protein] + ADP + H(+). It catalyses the reaction L-threonyl-[protein] + ATP = O-phospho-L-threonyl-[protein] + ADP + H(+). With respect to regulation, activated by calcium. Autophosphorylation may play an important role in the regulation of the kinase activity. May play a role in signal transduction pathways that involve calcium as a second messenger. In Arabidopsis thaliana (Mouse-ear cress), this protein is Calcium-dependent protein kinase 26 (CPK26).